A 174-amino-acid polypeptide reads, in one-letter code: UPF0398 protein YfdB (174 aa).

It belongs to the UPF0398 family.

This Lactococcus lactis subsp. lactis (strain IL1403) (Streptococcus lactis) protein is UPF0398 protein YfdB (yfdB).